Here is a 508-residue protein sequence, read N- to C-terminus: BICD family-like cargo adapter 2 (508 aa).

The span at 1–22 shows a compositional bias: low complexity; the sequence is MSSPDGPSFPSGPLSGGASPSG. Disordered regions lie at residues 1-27, 132-152, and 300-351; these read MSSP…EGFF, LGEQ…ALSE, and AHSL…TSLS. Coiled-coil stretches lie at residues 64-300 and 353-458; these read AAEL…SELA and AEIL…DMQV. A compositionally biased stretch (basic and acidic residues) spans 135-149; it reads QRSEQQDSGRERARA. The tract at residues 470 to 491 is disordered; the sequence is KELSASASSSTPRRAAPRFSLR. Residues 473 to 489 are compositionally biased toward low complexity; it reads SASASSSTPRRAAPRFS.

The protein belongs to the BICDR family. As to quaternary structure, interacts with RAB13.

The sequence is that of BICD family-like cargo adapter 2 (BICDL2) from Homo sapiens (Human).